We begin with the raw amino-acid sequence, 611 residues long: Protein halfway (611 aa).

Residues 1 to 22 (MLAYTHGTWLLLLLLLVAGACA) form the signal peptide. 3 disordered regions span residues 31–64 (DPAA…LKED), 90–132 (SLAE…AAPE), and 154–185 (GRAE…CQCR). Positions 43-59 (AHAHPQARHHHHAHPHA) are enriched in basic residues. A compositionally biased stretch (polar residues) spans 90–101 (SLAETQSMSDPG). Over residues 102-123 (SVTDTTSTSTSHSTSTTSTTSP) the composition is skewed to low complexity. The span at 159-183 (SEGQGSTVAQSEAQNRGGQGNSQCQ) shows a compositional bias: polar residues. Asparagine 221, asparagine 246, asparagine 264, and asparagine 269 each carry an N-linked (GlcNAc...) asparagine glycan. LRR repeat units lie at residues 236 to 257 (SLQS…FPRL), 259 to 280 (ALKC…AVKD), 283 to 304 (HLEF…NQNK), and 313 to 334 (NMRM…NFLN). The LRRNT domain maps to 361–416 (ENRKRCVTNCPVIPNYGSCNCTLENIMIIQDNQSKPQCHVDCSNLGLVELPQRLPD). 3 LRR repeats span residues 417 to 438 (NTFM…FHTN), 443 to 464 (NINR…EGTK), and 468 to 489 (TFQR…FLNN). An LRRCT domain is found at 505–554 (NKLQCDCNSAKTLQNWLKERSSDIPDYMEIRCRNMPQRVIELQEAKLCQS).

Has a role in the ecdysone induced cascade; probably indirect control of 'late' ecdysone genes. The chain is Protein halfway from Drosophila melanogaster (Fruit fly).